A 187-amino-acid polypeptide reads, in one-letter code: Putative gamma-glutamylcyclotransferase At3g02910 (187 aa).

Substrate is bound at residue 17–20; that stretch reads YGTL. Glu92 (proton acceptor) is an active-site residue.

It belongs to the gamma-glutamylcyclotransferase family.

Its function is as follows. Putative gamma-glutamylcyclotransferase. In Arabidopsis thaliana (Mouse-ear cress), this protein is Putative gamma-glutamylcyclotransferase At3g02910.